Consider the following 216-residue polypeptide: Guanylate kinase (216 aa).

Positions 11-189 (GVLIVISGPS…AVKKIEAILL (179 aa)) constitute a Guanylate kinase-like domain. 18 to 25 (GPSGAGKG) is a binding site for ATP.

The protein belongs to the guanylate kinase family.

Its subcellular location is the cytoplasm. The enzyme catalyses GMP + ATP = GDP + ADP. Its function is as follows. Essential for recycling GMP and indirectly, cGMP. This is Guanylate kinase from Clostridium perfringens (strain SM101 / Type A).